The sequence spans 88 residues: Large ribosomal subunit protein bL31B (88 aa).

Belongs to the bacterial ribosomal protein bL31 family. Type B subfamily. In terms of assembly, part of the 50S ribosomal subunit.

The polypeptide is Large ribosomal subunit protein bL31B (Herminiimonas arsenicoxydans).